The following is a 317-amino-acid chain: Acetyl-coenzyme A carboxylase carboxyl transferase subunit alpha (317 aa).

In terms of domain architecture, CoA carboxyltransferase C-terminal spans 40–294 (RLQHKSQELT…KQQILADLAE (255 aa)).

Belongs to the AccA family. Acetyl-CoA carboxylase is a heterohexamer composed of biotin carboxyl carrier protein (AccB), biotin carboxylase (AccC) and two subunits each of ACCase subunit alpha (AccA) and ACCase subunit beta (AccD).

It is found in the cytoplasm. The enzyme catalyses N(6)-carboxybiotinyl-L-lysyl-[protein] + acetyl-CoA = N(6)-biotinyl-L-lysyl-[protein] + malonyl-CoA. It participates in lipid metabolism; malonyl-CoA biosynthesis; malonyl-CoA from acetyl-CoA: step 1/1. Functionally, component of the acetyl coenzyme A carboxylase (ACC) complex. First, biotin carboxylase catalyzes the carboxylation of biotin on its carrier protein (BCCP) and then the CO(2) group is transferred by the carboxyltransferase to acetyl-CoA to form malonyl-CoA. This is Acetyl-coenzyme A carboxylase carboxyl transferase subunit alpha from Haemophilus ducreyi (strain 35000HP / ATCC 700724).